The chain runs to 251 residues: Triosephosphate isomerase (251 aa).

Asn9–Lys11 contributes to the substrate binding site. Catalysis depends on His96, which acts as the Electrophile. Glu168 functions as the Proton acceptor in the catalytic mechanism. Residues Gly174, Ser214, and Gly235 to Gly236 contribute to the substrate site.

This sequence belongs to the triosephosphate isomerase family. Homodimer.

The protein resides in the cytoplasm. The enzyme catalyses D-glyceraldehyde 3-phosphate = dihydroxyacetone phosphate. It functions in the pathway carbohydrate biosynthesis; gluconeogenesis. The protein operates within carbohydrate degradation; glycolysis; D-glyceraldehyde 3-phosphate from glycerone phosphate: step 1/1. Its function is as follows. Involved in the gluconeogenesis. Catalyzes stereospecifically the conversion of dihydroxyacetone phosphate (DHAP) to D-glyceraldehyde-3-phosphate (G3P). The chain is Triosephosphate isomerase from Cytophaga hutchinsonii (strain ATCC 33406 / DSM 1761 / CIP 103989 / NBRC 15051 / NCIMB 9469 / D465).